The chain runs to 1575 residues: Lysophospholipase NTE1 (1575 aa).

A disordered region spans residues 1–56 (MNLTTTMPAAVAPDPPAQLAVSSRSLSDSSDAAGASRTSSSCRASSPSHCPTHAWN). Topologically, residues 1-99 (MNLTTTMPAA…TLSPPNLLQG (99 aa)) are cytoplasmic. Positions 19–48 (LAVSSRSLSDSSDAAGASRTSSSCRASSPS) are enriched in low complexity. A helical transmembrane segment spans residues 100–120 (IVSQLAMASYIGRLLLYLFQV). At 121 to 151 (VPSLLYWAITFTTITVPTALFTLFSMSLTFT) the chain is on the lumenal side. A helical transmembrane segment spans residues 152 to 172 (MNFTTLLIIVLLLVSTVSWFI). The Cytoplasmic portion of the chain corresponds to 173 to 1575 (RYRFLNIYSR…RTMAPRRASI (1403 aa)). 2 disordered regions span residues 339-425 (DMES…AKSV) and 568-587 (GSAS…VSPG). Basic residues predominate over residues 409 to 424 (RGHRRKRPSRPKRAKS). Residues 737-856 (GGTS…TSYR) and 894-1014 (RLTT…IAQR) each bind a nucleoside 3',5'-cyclic phosphate. In terms of domain architecture, PNPLA spans 1272 to 1436 (LVLGGGGARG…VDNLTVARMK (165 aa)). Positions 1276 to 1281 (GGGARG) match the GXGXXG motif. The short motif at 1303 to 1307 (GTSIG) is the GXSXG element. The Nucleophile role is filled by serine 1305. Aspartate 1423 functions as the Proton acceptor in the catalytic mechanism. The short motif at 1423–1425 (DGG) is the DGA/G element.

This sequence belongs to the NTE family.

It is found in the endoplasmic reticulum membrane. It carries out the reaction a 1-acyl-sn-glycero-3-phosphocholine + H2O = sn-glycerol 3-phosphocholine + a fatty acid + H(+). Its activity is regulated as follows. Inhibited by organophosphorus esters. Intracellular phospholipase B that catalyzes the double deacylation of phosphatidylcholine (PC) to glycerophosphocholine (GroPCho). Plays an important role in membrane lipid homeostasis. Responsible for the rapid PC turnover in response to inositol, elevated temperatures, or when choline is present in the growth medium. This chain is Lysophospholipase NTE1 (NTE1), found in Coccidioides immitis (strain RS) (Valley fever fungus).